A 420-amino-acid polypeptide reads, in one-letter code: Glutamyl-tRNA reductase (420 aa).

Substrate-binding positions include 49–52 (TCNR), serine 109, 114–116 (EPQ), and glutamine 120. Cysteine 50 functions as the Nucleophile in the catalytic mechanism. 189–194 (GAGETI) provides a ligand contact to NADP(+).

Belongs to the glutamyl-tRNA reductase family. In terms of assembly, homodimer.

The enzyme catalyses (S)-4-amino-5-oxopentanoate + tRNA(Glu) + NADP(+) = L-glutamyl-tRNA(Glu) + NADPH + H(+). It participates in porphyrin-containing compound metabolism; protoporphyrin-IX biosynthesis; 5-aminolevulinate from L-glutamyl-tRNA(Glu): step 1/2. Functionally, catalyzes the NADPH-dependent reduction of glutamyl-tRNA(Glu) to glutamate 1-semialdehyde (GSA). This is Glutamyl-tRNA reductase from Yersinia enterocolitica serotype O:8 / biotype 1B (strain NCTC 13174 / 8081).